We begin with the raw amino-acid sequence, 970 residues long: Cullin-4B (970 aa).

The span at methionine 1–aspartate 14 shows a compositional bias: basic and acidic residues. Disordered stretches follow at residues methionine 1–leucine 157 and alanine 189–glutamine 211. Threonine 15 bears the Phosphothreonine mark. Serine 17 is modified (phosphoserine). Over residues proline 36–glutamine 57 the composition is skewed to pro residues. A compositionally biased stretch (low complexity) spans serine 78 to alanine 98. Positions threonine 99 to threonine 109 are enriched in polar residues. Position 106 is a phosphothreonine (threonine 106). Phosphoserine is present on serine 110. The Nuclear localization signal motif lies at lysine 112–lysine 115. The span at asparagine 117–serine 126 shows a compositional bias: low complexity. Residues aspartate 146 to phenylalanine 155 show a composition bias toward polar residues. Serine 154 and serine 200 each carry phosphoserine. Over residues serine 192 to glutamine 211 the composition is skewed to low complexity. Threonine 202 is subject to Phosphothreonine. A Glycyl lysine isopeptide (Lys-Gly) (interchain with G-Cter in ubiquitin) cross-link involves residue lysine 247. A Phosphoserine modification is found at serine 250. One can recognise a Cullin neddylation domain in the interval aspartate 902–asparagine 962. Lysine 916 participates in a covalent cross-link: Glycyl lysine isopeptide (Lys-Gly) (interchain with G-Cter in NEDD8).

The protein belongs to the cullin family. As to quaternary structure, component of multiple DCX (DDB1-CUL4-X-box) E3 ubiquitin-protein ligase complexes that seem to be formed of DDB1, CUL4A or CUL4B, RBX1 and a variable substrate recognition component which seems to belong to a protein family described as DCAF (Ddb1- and Cul4-associated factor) or CDW (CUL4-DDB1-associated WD40-repeat) proteins. Component of the DCX(DTL) complex with the putative substrate recognition component DTL. Component of the DCX(DDB2) complex with the putative substrate recognition component DDB2. Component of DCX complexes part of the DesCEND (destruction via C-end degrons) pathway, which contain either TRPC4AP or DCAF12 as substrate-recognition component. Component of the DCX(AMBRA1) complex with the substrate recognition component AMBRA1. Part of a complex with RBX1 and TIP120A/CAND1. Component of the DCX(WDR77) complex, composed of Cul4b, Ddb1, Wdr77 and Rbx1. Interacts with RBX1, GRWD1, MLST8, SMU1, TLE2, TLE3, DCAF1, DDA1, DCAF6, DCAF17, DDB2, DCAF8, TIP120A/CAND1 and TMEM113. Interacts with cyclin E (CCNE1 or CCNE2) and with importins alpha-1 (KPNA2), alpha-3 (KPNA4), alpha-5 (KPNA1) and beta-1 (KPNB1). May interact with WDR26, WDR51B, SNRNP40, WDR61, WDR76 and WDR5. Interacts (unneddylated form) with DCUN1D1, DCUN1D2, DCUN1D3, DCUN1D4 and DCUN1D5; these interactions promote the cullin neddylation. In terms of processing, neddylated. Deneddylated via its interaction with the COP9 signalosome (CSN) complex. As to expression, expressed in oocytes (at protein level).

The protein localises to the cytoplasm. Its subcellular location is the nucleus. Its pathway is protein modification; protein ubiquitination. Core component of multiple cullin-RING-based E3 ubiquitin-protein ligase complexes which mediate the ubiquitination and subsequent proteasomal degradation of target proteins. The functional specificity of the E3 ubiquitin-protein ligase complex depends on the variable substrate recognition subunit. CUL4B may act within the complex as a scaffold protein, contributing to catalysis through positioning of the substrate and the ubiquitin-conjugating enzyme. Plays a role as part of the E3 ubiquitin-protein ligase complex in polyubiquitination of CDT1, histone H2A, histone H3 and histone H4 in response to radiation-induced DNA damage. Targeted to UV damaged chromatin by DDB2 and may be important for DNA repair and DNA replication. A number of DCX complexes (containing either TRPC4AP or DCAF12 as substrate-recognition component) are part of the DesCEND (destruction via C-end degrons) pathway, which recognizes a C-degron located at the extreme C terminus of target proteins, leading to their ubiquitination and degradation. The DCX(AMBRA1) complex is a master regulator of the transition from G1 to S cell phase by mediating ubiquitination of phosphorylated cyclin-D (CCND1, CCND2 and CCND3). The DCX(AMBRA1) complex also acts as a regulator of Cul5-RING (CRL5) E3 ubiquitin-protein ligase complexes by mediating ubiquitination and degradation of Elongin-C (ELOC) component of CRL5 complexes. Required for ubiquitination of cyclin E (CCNE1 or CCNE2), and consequently, normal G1 cell cycle progression. Component of the DCX(WDR77) complex, which mediates ubiquitination and degradation of Irgm1 in intestinal cells. Regulates the mammalian target-of-rapamycin (mTOR) pathway involved in control of cell growth, size and metabolism. Specific CUL4B regulation of the mTORC1-mediated pathway is dependent upon 26S proteasome function and requires interaction between CUL4B and MLST8. With CUL4A, contributes to ribosome biogenesis. In Mus musculus (Mouse), this protein is Cullin-4B.